A 149-amino-acid chain; its full sequence is Calmodulin-3 (149 aa).

Ala-2 is subject to N-acetylalanine. EF-hand domains are found at residues 8 to 43 (DQIAEFKEAFSLFDKDGDGCITTKELGTVMRSLGQN), 44 to 79 (PTEAELQDMINEVDADGNGTIDFPEFLNLMARKMKD), 81 to 116 (DSEEELKEAFRVFDKDQNGFISAAELRHVMTNLGEK), and 117 to 149 (LTDEEVEEMIREADVDGDGQINYDEFVKVMMAK). 14 residues coordinate Ca(2+): Asp-21, Asp-23, Asp-25, Cys-27, Glu-32, Asp-57, Asp-59, Asn-61, Thr-63, Glu-68, Asp-94, Asp-96, Asn-98, and Glu-105. N6,N6,N6-trimethyllysine is present on Lys-116. Positions 130, 132, 134, 136, and 141 each coordinate Ca(2+).

Belongs to the calmodulin family.

Functionally, calmodulin mediates the control of a large number of enzymes, ion channels and other proteins by Ca(2+). Among the enzymes to be stimulated by the calmodulin-Ca(2+) complex are a number of protein kinases and phosphatases. The protein is Calmodulin-3 (CAM3) of Oryza sativa subsp. japonica (Rice).